The chain runs to 652 residues: Aorsin (652 aa).

Positions Met1–Ala22 are cleaved as a signal peptide. A propeptide spans Ala23–Lys215 (removed in mature form). The N-linked (GlcNAc...) asparagine glycan is linked to Asn112. A disordered region spans residues Val177–Gln211. The segment covering Ser188–Leu201 has biased composition (basic residues). N-linked (GlcNAc...) asparagine glycosylation is found at Asn218 and Asn247. One can recognise a Peptidase S53 domain in the interval Leu225 to Leu651. Active-site charge relay system residues include Glu301 and Asp305. Asn331 and Asn445 each carry an N-linked (GlcNAc...) asparagine glycan. Ser569 (charge relay system) is an active-site residue. Residues Asp610 and Ile611 each contribute to the Ca(2+) site. N-linked (GlcNAc...) asparagine glycosylation occurs at Asn613. Ca(2+)-binding residues include Gly629 and Asp631.

The cofactor is Ca(2+). N-glycosylated. Post-translationally, O-glycosylated.

Its subcellular location is the secreted. It is found in the extracellular space. With respect to regulation, inhibited by antipain and leupeptin. Functionally, serine endopeptidase which hydrolyzes a range of fluorogenic peptide substrates containing the basic residues arginine or lysine at the P1 position and prefers paired basic resides. Also hydrolyzes clupeine and salmine, activates plasminogen and converts trypsinogen to trypsin. The sequence is that of Aorsin from Aspergillus oryzae (strain ATCC 42149 / RIB 40) (Yellow koji mold).